The primary structure comprises 268 residues: Tropinone reductase homolog At2g29170 (268 aa).

Residue 22 to 46 participates in NADP(+) binding; it reads LVTGGSKGLGEAVVEELAMLGARVH. Position 155 (serine 155) interacts with substrate. Tyrosine 168 serves as the catalytic Proton acceptor.

Belongs to the short-chain dehydrogenases/reductases (SDR) family. SDR65C subfamily.

The protein is Tropinone reductase homolog At2g29170 of Arabidopsis thaliana (Mouse-ear cress).